The chain runs to 186 residues: Ribosome-recycling factor (186 aa).

The protein belongs to the RRF family.

It is found in the cytoplasm. Responsible for the release of ribosomes from messenger RNA at the termination of protein biosynthesis. May increase the efficiency of translation by recycling ribosomes from one round of translation to another. This chain is Ribosome-recycling factor, found in Cupriavidus pinatubonensis (strain JMP 134 / LMG 1197) (Cupriavidus necator (strain JMP 134)).